The sequence spans 635 residues: Cationic amino acid transporter 4 (635 aa).

The next 3 helical transmembrane spans lie at 42–62, 66–86, and 113–133; these read LTLL…TGAV, VAGP…LLAA, and LWAF…GAAV. N151 and N195 each carry an N-linked (GlcNAc...) asparagine glycan. The helical transmembrane segment at 197–217 threads the bilayer; that stretch reads TFSAISLLVILFIVILGFILA. N-linked (GlcNAc...) asparagine glycosylation is present at N221. 5 helical membrane-spanning segments follow: residues 229–249, 270–290, 318–338, 365–385, and 391–411; these read FAPF…YAFV, LAIA…STVL, GFIV…SLLF, QVPV…ALLL, and VQFL…SIIV. A phosphoserine mark is found at S422 and S427. The helical transmembrane segment at 478–498 threads the bilayer; that stretch reads VTWALGVMLASAITIGCVLVF. N500 carries an N-linked (GlcNAc...) asparagine glycan. Helical transmembrane passes span 508 to 528, 539 to 559, and 567 to 587; these read WGYI…LLVL, LFQI…NICL, and TWVR…GYGI. A glycan (N-linked (GlcNAc...) asparagine) is linked at N601.

Belongs to the amino acid-polyamine-organocation (APC) superfamily. Cationic amino acid transporter (CAT) (TC 2.A.3.3) family.

The protein resides in the membrane. In terms of biological role, involved in the transport of the cationic amino acids (arginine, lysine and ornithine). The sequence is that of Cationic amino acid transporter 4 (SLC7A4) from Homo sapiens (Human).